The primary structure comprises 185 residues: Elongation factor P (185 aa).

The protein belongs to the elongation factor P family.

The protein localises to the cytoplasm. It participates in protein biosynthesis; polypeptide chain elongation. Its function is as follows. Involved in peptide bond synthesis. Stimulates efficient translation and peptide-bond synthesis on native or reconstituted 70S ribosomes in vitro. Probably functions indirectly by altering the affinity of the ribosome for aminoacyl-tRNA, thus increasing their reactivity as acceptors for peptidyl transferase. This is Elongation factor P from Nitratidesulfovibrio vulgaris (strain DSM 19637 / Miyazaki F) (Desulfovibrio vulgaris).